A 370-amino-acid chain; its full sequence is StAR-related lipid transfer protein 7, mitochondrial (370 aa).

A mitochondrion-targeting transit peptide spans 1–58 (MLPRRLLAAWLAGTRGGGLLALLANQCRFVTGLRVRRAQQIAQLYGRLYSESSRRVLL). The stretch at 86–111 (DEERIQEEELQRSINEMKRLEEMSNM) forms a coiled coil. 2 disordered regions span residues 111–138 (MFQSSGVQHHPPEPKAQTEGNEDSEGKE) and 343–370 (MSSEAKATSQSSERKNEGSCGPARIEYA). Positions 112–327 (FQSSGVQHHP…LHMATLKAKN (216 aa)) constitute an START domain.

Post-translationally, proteolytically cleaved by PARL. Expressed in nasal epithelial cells. Down-regulated in nasal epithelial cells in patients experiencing an asthma exacerbation as compared to stable asthmatics and healthy controls.

Its subcellular location is the mitochondrion. In terms of biological role, may play a protective role in mucosal tissues by preventing exaggerated allergic responses. The polypeptide is StAR-related lipid transfer protein 7, mitochondrial (STARD7) (Homo sapiens (Human)).